Consider the following 436-residue polypeptide: CaM kinase-like vesicle-associated protein (436 aa).

One can recognise a Protein kinase domain in the interval 24–286; the sequence is YDLGQIVKSE…AQEAINHEWI (263 aa). A disordered region spans residues 328-436; the sequence is APENQTAAAT…ALDTVEEQSG (109 aa). Residues 333 to 409 show a composition bias toward low complexity; the sequence is TAAATAPAAE…QPPAEPVVHV (77 aa).

It belongs to the protein kinase superfamily. CAMK Ser/Thr protein kinase family. Interacts with calmodulin, in the presence of calcium. Ca(2+) is required as a cofactor.

Its subcellular location is the cytoplasmic vesicle membrane. Does not appear to have detectable kinase activity. This chain is CaM kinase-like vesicle-associated protein (camkv), found in Danio rerio (Zebrafish).